Here is a 652-residue protein sequence, read N- to C-terminus: ATP-binding cassette sub-family G member 5 (652 aa).

Positions 1–25 (MGELPFLSPEGARGPHINRGSLSSL) are disordered. The Cytoplasmic portion of the chain corresponds to 1–384 (MGELPFLSPE…RVTRNLMRNK (384 aa)). The 256-residue stretch at 39–294 (LGVLHVSYSV…FNNCGYPCPE (256 aa)) folds into the ABC transporter domain. Residue C61 is the site of S-palmitoyl cysteine attachment. 87-94 (GSSGSGKT) lines the ATP pocket. The helical transmembrane segment at 385-405 (QAVIMRLVQNLIMGLFLIFYL) threads the bilayer. The ABC transmembrane type-2 domain maps to 389–646 (MRLVQNLIMG…ILGIVIFKVR (258 aa)). The Extracellular portion of the chain corresponds to 406 to 422 (LRVQNNTLKGAVQDRVG). N410 is a glycosylation site (N-linked (GlcNAc...) asparagine). A helical transmembrane segment spans residues 423–443 (LLYQLVGATPYTGMLNAVNLF). The Cytoplasmic segment spans residues 444-468 (PMLRAVSDQESQDGLYHKWQMLLAY). Residues 469-490 (VLHVLPFSVIATVIFSSVCYWT) traverse the membrane as a helical segment. Topologically, residues 491–501 (LGLYPEVARFG) are extracellular. The helical transmembrane segment at 502–522 (YFSAALLAPHLIGEFLTLVLL) threads the bilayer. The Cytoplasmic segment spans residues 523 to 529 (GIVQNPN). Residues 530–550 (IVNSIVALLSISGLLIGSGFI) form a helical membrane-spanning segment. The Extracellular segment spans residues 551 to 624 (RNIQEMPIPL…PGATSRFTAN (74 aa)). 2 N-linked (GlcNAc...) asparagine glycosylation sites follow: N585 and N592. A helical transmembrane segment spans residues 625-645 (FLILYGFIPALVILGIVIFKV). The Cytoplasmic segment spans residues 646–652 (RDYLISR).

Belongs to the ABC transporter superfamily. ABCG family. Eye pigment precursor importer (TC 3.A.1.204) subfamily. As to quaternary structure, heterodimer with ABCG8. The cofactor is Mg(2+). In terms of processing, N-glycosylated. N-glycosylation is important for efficient export out of the endoplasmic reticulum. In terms of tissue distribution, detected in liver and jejunum. Detected on enterocyte villi (at protein level). Expressed in jejunum, ileum and, at lower level, in the liver.

Its subcellular location is the cell membrane. The protein resides in the apical cell membrane. The catalysed reaction is cholesterol(in) + ATP + H2O = cholesterol(out) + ADP + phosphate + H(+). The enzyme catalyses sitosterol(in) + ATP + H2O = sitosterol(out) + ADP + phosphate + H(+). Cholesterol transport is inhibited by vanadate and by beryllium fluoride. Functionally, ABCG5 and ABCG8 form an obligate heterodimer that mediates Mg(2+)- and ATP-dependent sterol transport across the cell membrane. Plays an essential role in the selective transport of dietary plant sterols and cholesterol in and out of the enterocytes and in the selective sterol excretion by the liver into bile. Required for normal sterol homeostasis. The heterodimer with ABCG8 has ATPase activity. The chain is ATP-binding cassette sub-family G member 5 from Mus musculus (Mouse).